The chain runs to 187 residues: Shikimate kinase (187 aa).

14 to 19 (GSGKST) is a binding site for ATP. Serine 18 is a Mg(2+) binding site. Substrate-binding residues include aspartate 36, arginine 60, and glycine 82. Arginine 120 is a binding site for ATP. Substrate is bound at residue arginine 147.

This sequence belongs to the shikimate kinase family. As to quaternary structure, monomer. The cofactor is Mg(2+).

It localises to the cytoplasm. The catalysed reaction is shikimate + ATP = 3-phosphoshikimate + ADP + H(+). The protein operates within metabolic intermediate biosynthesis; chorismate biosynthesis; chorismate from D-erythrose 4-phosphate and phosphoenolpyruvate: step 5/7. In terms of biological role, catalyzes the specific phosphorylation of the 3-hydroxyl group of shikimic acid using ATP as a cosubstrate. The sequence is that of Shikimate kinase from Chlorobaculum parvum (strain DSM 263 / NCIMB 8327) (Chlorobium vibrioforme subsp. thiosulfatophilum).